The chain runs to 143 residues: Regulator of ribonuclease activity B (143 aa).

A disordered region spans residues 113–143 (EDPNAEEDEYGDDGEFFDDEDEADFNNAKVH). The span at 115–136 (PNAEEDEYGDDGEFFDDEDEAD) shows a compositional bias: acidic residues.

This sequence belongs to the RraB family. In terms of assembly, interacts with the C-terminal region of Rne.

The protein localises to the cytoplasm. Functionally, globally modulates RNA abundance by binding to RNase E (Rne) and regulating its endonucleolytic activity. Can modulate Rne action in a substrate-dependent manner by altering the composition of the degradosome. This chain is Regulator of ribonuclease activity B, found in Haemophilus ducreyi (strain 35000HP / ATCC 700724).